Consider the following 62-residue polypeptide: Large ribosomal subunit protein uL30 (62 aa).

The protein belongs to the universal ribosomal protein uL30 family. Part of the 50S ribosomal subunit.

In Ruegeria pomeroyi (strain ATCC 700808 / DSM 15171 / DSS-3) (Silicibacter pomeroyi), this protein is Large ribosomal subunit protein uL30.